Here is a 335-residue protein sequence, read N- to C-terminus: Ethanol acetyltransferase 1 (335 aa).

Residues 48–300 enclose the AB hydrolase-1 domain; that stretch reads PIVFVHGIFG…NSAHDILDQR (253 aa). Active-site charge relay system residues include Ser121, Asp145, and His294.

It belongs to the AB hydrolase superfamily.

It is found in the mitochondrion. The enzyme catalyses ethanol + acetyl-CoA = ethyl acetate + CoA. The catalysed reaction is acetyl-CoA + H2O = acetate + CoA + H(+). It carries out the reaction ethyl acetate + H2O = ethanol + acetate + H(+). Alcohol acetyltransferase that catalyzes the synthesis of ethyl acetate from ethanol and acetyl-CoA. Can also function as a thioesterase by hydrolyzing acetyl-CoA in the absence of ethanol, as well as esterase hydrolyzing ethyl acetate. The chain is Ethanol acetyltransferase 1 (EAT1) from Cyberlindnera fabianii (Yeast).